A 155-amino-acid polypeptide reads, in one-letter code: uncharacterized protein (155 aa).

4 helical membrane-spanning segments follow: residues 25-45 (LPMGFIGITLFEIGILLFGWT), 50-70 (IFWFVPTIGSAIMGGGYIMTS), 91-111 (GVKIFQLLLGAIFPLFAESLF), and 118-138 (WGCTLLAFILLACGCSLPILF).

The protein belongs to the major facilitator superfamily. CAR1 family.

The protein localises to the membrane. This is an uncharacterized protein from Schizosaccharomyces pombe (strain 972 / ATCC 24843) (Fission yeast).